Consider the following 285-residue polypeptide: Putative cuticle collagen 75 (285 aa).

Triple-helical region regions lie at residues 87–116 and 133–261; these read GRIGITGPDGQPGKDGLPGMPGSPGIPGEL and GPKG…PGLD. Low complexity predominate over residues 207-231; it reads PGAPGIPGEEGLSGPTGQPGSPGSI. Residues 207–257 are disordered; sequence PGAPGIPGEEGLSGPTGQPGSPGSIGAMGYEGAYGDRGEPGPPGPIGRRGG.

The protein belongs to the cuticular collagen family. In terms of assembly, collagen polypeptide chains are complexed within the cuticle by disulfide bonds and other types of covalent cross-links.

Functionally, nematode cuticles are composed largely of collagen-like proteins. The cuticle functions both as an exoskeleton and as a barrier to protect the worm from its environment. In Caenorhabditis elegans, this protein is Putative cuticle collagen 75 (col-75).